Consider the following 198-residue polypeptide: RNA pyrophosphohydrolase (198 aa).

A Nudix hydrolase domain is found at 6–149 (GYRPNVGIVI…KKEVYRKAMK (144 aa)). Residues 38–59 (GGINDNESAEQAMYRELFEEVG) carry the Nudix box motif.

It belongs to the Nudix hydrolase family. RppH subfamily. A divalent metal cation is required as a cofactor.

Accelerates the degradation of transcripts by removing pyrophosphate from the 5'-end of triphosphorylated RNA, leading to a more labile monophosphorylated state that can stimulate subsequent ribonuclease cleavage. This is RNA pyrophosphohydrolase from Pasteurella multocida (strain Pm70).